A 449-amino-acid chain; its full sequence is Bifunctional protein GlmU (449 aa).

Residues 1–231 (MVRNCLSIVL…FDNVIGINNC (231 aa)) are pyrophosphorylase. UDP-N-acetyl-alpha-D-glucosamine-binding positions include 10 to 13 (LAAG), K24, Q77, and 82 to 83 (GT). Residue D107 coordinates Mg(2+). UDP-N-acetyl-alpha-D-glucosamine contacts are provided by G143, E157, N172, and N229. N229 contributes to the Mg(2+) binding site. A linker region spans residues 232–252 (FELFEADALWQKRKARDLMLS). The segment at 253-449 (GVTILKPESV…AHLSKNKRNK (197 aa)) is N-acetyltransferase. Residues R318 and K336 each contribute to the UDP-N-acetyl-alpha-D-glucosamine site. H348 serves as the catalytic Proton acceptor. UDP-N-acetyl-alpha-D-glucosamine is bound by residues Y351 and N362. Residues A365, 371–372 (NY), S390, S408, and R425 contribute to the acetyl-CoA site.

This sequence in the N-terminal section; belongs to the N-acetylglucosamine-1-phosphate uridyltransferase family. In the C-terminal section; belongs to the transferase hexapeptide repeat family. Homotrimer. Mg(2+) is required as a cofactor.

The protein localises to the cytoplasm. The catalysed reaction is alpha-D-glucosamine 1-phosphate + acetyl-CoA = N-acetyl-alpha-D-glucosamine 1-phosphate + CoA + H(+). It carries out the reaction N-acetyl-alpha-D-glucosamine 1-phosphate + UTP + H(+) = UDP-N-acetyl-alpha-D-glucosamine + diphosphate. Its pathway is nucleotide-sugar biosynthesis; UDP-N-acetyl-alpha-D-glucosamine biosynthesis; N-acetyl-alpha-D-glucosamine 1-phosphate from alpha-D-glucosamine 6-phosphate (route II): step 2/2. It participates in nucleotide-sugar biosynthesis; UDP-N-acetyl-alpha-D-glucosamine biosynthesis; UDP-N-acetyl-alpha-D-glucosamine from N-acetyl-alpha-D-glucosamine 1-phosphate: step 1/1. It functions in the pathway bacterial outer membrane biogenesis; LPS lipid A biosynthesis. In terms of biological role, catalyzes the last two sequential reactions in the de novo biosynthetic pathway for UDP-N-acetylglucosamine (UDP-GlcNAc). The C-terminal domain catalyzes the transfer of acetyl group from acetyl coenzyme A to glucosamine-1-phosphate (GlcN-1-P) to produce N-acetylglucosamine-1-phosphate (GlcNAc-1-P), which is converted into UDP-GlcNAc by the transfer of uridine 5-monophosphate (from uridine 5-triphosphate), a reaction catalyzed by the N-terminal domain. The polypeptide is Bifunctional protein GlmU (Bartonella bacilliformis (strain ATCC 35685 / KC583 / Herrer 020/F12,63)).